Reading from the N-terminus, the 451-residue chain is Porin AaxA (451 aa).

Positions 1 to 27 are cleaved as a signal peptide; that stretch reads MASFHSSLLTALCTLCTYGILTMPAYG.

It belongs to the OprB family.

The protein localises to the cell outer membrane. Functionally, facilitates L-arginine uptake, as part of the AaxABC system. The arginine uptake by the bacterium in the macrophage may be a virulence factor against the host innate immune response. In Chlamydia caviae (strain ATCC VR-813 / DSM 19441 / 03DC25 / GPIC) (Chlamydophila caviae), this protein is Porin AaxA (aaxA).